Consider the following 198-residue polypeptide: Ras-like protein 2 (198 aa).

Residue 18–25 (GDGGVGKS) participates in GTP binding. Positions 40 to 48 (YDPTIEDSY) match the Effector region motif. Residues 65 to 69 (DTAGQ) and 124 to 127 (NKCD) contribute to the GTP site. A Cysteine methyl ester modification is found at Cys-195. Cys-195 carries S-farnesyl cysteine lipidation. Residues 196–198 (IVM) constitute a propeptide, removed in mature form.

The protein belongs to the small GTPase superfamily. Ras family.

It localises to the cell membrane. The catalysed reaction is GTP + H2O = GDP + phosphate + H(+). Alternates between an inactive form bound to GDP and an active form bound to GTP. Activated by a guanine nucleotide-exchange factor (GEF) and inactivated by a GTPase-activating protein (GAP). This is Ras-like protein 2 (RAS2) from Mucor circinelloides f. lusitanicus (Mucor racemosus var. lusitanicus).